We begin with the raw amino-acid sequence, 254 residues long: Mantle protein (254 aa).

An N-terminal signal peptide occupies residues 1 to 16; that stretch reads MLAVLLFAALVATAYS.

As to expression, prismatic layer of shell (at protein level). Expressed primarily in the mantle with highest level in the outer epithelium of the mantle edge and lower level in the mantle pallium.

The protein resides in the secreted. This Margaritifera margaritifera (Freshwater pearl mussel) protein is Mantle protein.